Here is a 2376-residue protein sequence, read N- to C-terminus: Protein Ycf2 (2376 aa).

Disordered regions lie at residues 173–194 (SSQL…GTED), 226–256 (TEIE…EMNN), and 952–1011 (KRKK…KRKE). Positions 235 to 245 (KGLSGSSSKSR) are enriched in low complexity. Basic and acidic residues-rich tracts occupy residues 246–255 (LFTEGEKEMN) and 960–1009 (KRKE…PEKR). Position 1441–1448 (1441–1448 (GSIGSGRS)) interacts with ATP. Disordered stretches follow at residues 1515-1534 (YEDR…DYEP), 1860-2046 (LVGS…LRPK), and 2112-2230 (PAEE…DGFS). Positions 1866–2025 (TEEEVEGTEE…GEGTEDEEGE (160 aa)) are enriched in acidic residues. A compositionally biased stretch (basic and acidic residues) spans 2026-2038 (GTEKDSSQFDNDR). Composition is skewed to acidic residues over residues 2112–2129 (PAEE…EALE) and 2136–2213 (GEEE…ENDS).

It belongs to the Ycf2 family.

Its subcellular location is the plastid. The protein localises to the chloroplast stroma. In terms of biological role, probable ATPase of unknown function. Its presence in a non-photosynthetic plant (Epifagus virginiana) and experiments in tobacco indicate that it has an essential function which is probably not related to photosynthesis. The polypeptide is Protein Ycf2 (Oenothera glazioviana (Large-flowered evening primrose)).